Reading from the N-terminus, the 461-residue chain is Alcaligin biosynthesis enzyme (461 aa).

9-15 (VAIGIGP) contacts FAD.

It belongs to the lysine N(6)-hydroxylase/L-ornithine N(5)-oxygenase family. Requires FAD as cofactor.

It participates in siderophore biosynthesis; alcaligin biosynthesis. The polypeptide is Alcaligin biosynthesis enzyme (alcA) (Bordetella bronchiseptica (strain ATCC BAA-588 / NCTC 13252 / RB50) (Alcaligenes bronchisepticus)).